The chain runs to 332 residues: Glycerol-3-phosphate dehydrogenase [NAD(P)+] (332 aa).

NADPH contacts are provided by Trp-11, Arg-30, and Lys-108. Sn-glycerol 3-phosphate is bound by residues Lys-108, Gly-137, and Ser-139. Ala-141 contributes to the NADPH binding site. Lys-192, Asp-245, Ser-255, Arg-256, and Asn-257 together coordinate sn-glycerol 3-phosphate. Catalysis depends on Lys-192, which acts as the Proton acceptor. Arg-256 contacts NADPH. Residues Val-280 and Glu-282 each contribute to the NADPH site.

It belongs to the NAD-dependent glycerol-3-phosphate dehydrogenase family.

It localises to the cytoplasm. The catalysed reaction is sn-glycerol 3-phosphate + NAD(+) = dihydroxyacetone phosphate + NADH + H(+). The enzyme catalyses sn-glycerol 3-phosphate + NADP(+) = dihydroxyacetone phosphate + NADPH + H(+). It participates in membrane lipid metabolism; glycerophospholipid metabolism. Catalyzes the reduction of the glycolytic intermediate dihydroxyacetone phosphate (DHAP) to sn-glycerol 3-phosphate (G3P), the key precursor for phospholipid synthesis. This is Glycerol-3-phosphate dehydrogenase [NAD(P)+] from Burkholderia orbicola (strain AU 1054).